The following is an 802-amino-acid chain: Penicillin G acylase (802 aa).

An N-terminal signal peptide occupies residues M1–A24. E177 serves as a coordination point for Ca(2+). The propeptide at S235–G265 is spacer peptide. S266 (nucleophile) is an active-site residue. D341 contributes to the Ca(2+) binding site.

The protein belongs to the peptidase S45 family. As to quaternary structure, heterodimer of an alpha subunit and a beta subunit processed from the same precursor. Ca(2+) is required as a cofactor.

Its subcellular location is the secreted. It carries out the reaction a penicillin + H2O = 6-aminopenicillanate + a carboxylate. In Priestia megaterium (Bacillus megaterium), this protein is Penicillin G acylase (pac).